An 87-amino-acid chain; its full sequence is Small ribosomal subunit protein bS20 (87 aa).

Residues 1–10 (MANIKSKQKR) show a composition bias toward basic residues. The tract at residues 1 to 27 (MANIKSKQKRILTNEKSRQRNKSVRSA) is disordered.

The protein belongs to the bacterial ribosomal protein bS20 family.

In terms of biological role, binds directly to 16S ribosomal RNA. The polypeptide is Small ribosomal subunit protein bS20 (Corynebacterium aurimucosum (strain ATCC 700975 / DSM 44827 / CIP 107346 / CN-1) (Corynebacterium nigricans)).